A 415-amino-acid chain; its full sequence is Multidrug resistance protein MdtA (415 aa).

The N-terminal stretch at 1 to 21 (MKGSYKSRWVIVIVVVIAAIA) is a signal peptide. Residues 31-47 (DSQSAAPGATKQAQQSP) are compositionally biased toward polar residues. 2 disordered regions span residues 31-60 (DSQS…GPLA) and 392-415 (EAQS…GARS). Residues 399–415 (PEEKATSREYAKKGARS) show a composition bias toward basic and acidic residues.

This sequence belongs to the membrane fusion protein (MFP) (TC 8.A.1) family. In terms of assembly, part of a tripartite efflux system composed of MdtA, MdtB and MdtC.

The protein localises to the cell inner membrane. Functionally, the MdtABC tripartite complex confers resistance against novobiocin and deoxycholate. This Escherichia coli O8 (strain IAI1) protein is Multidrug resistance protein MdtA.